The chain runs to 361 residues: Protein Wnt-2 (361 aa).

The first 27 residues, 1–27, serve as a signal peptide directing secretion; it reads MNASVLGLCLSGPLVLLLAWLAPPVTS. Disulfide bonds link Cys77–Cys88, Cys128–Cys136, Cys138–Cys158, Cys207–Cys221, Cys209–Cys216, Cys279–Cys310, Cys295–Cys305, Cys309–Cys349, Cys325–Cys340, Cys327–Cys337, and Cys332–Cys333. Residue Ser213 is the site of O-palmitoleoyl serine; by PORCN attachment. N-linked (GlcNAc...) asparagine glycosylation occurs at Asn296.

Belongs to the Wnt family. Post-translationally, palmitoleoylation is required for efficient binding to frizzled receptors. Depalmitoleoylation leads to Wnt signaling pathway inhibition.

Its subcellular location is the secreted. The protein resides in the extracellular space. The protein localises to the extracellular matrix. Its function is as follows. Ligand for members of the frizzled family of seven transmembrane receptors. Probable developmental protein. May be a signaling molecule which affects the development of discrete regions of tissues. Is likely to signal over only few cell diameters. The protein is Protein Wnt-2 (WNT2) of Ornithorhynchus anatinus (Duckbill platypus).